A 200-amino-acid chain; its full sequence is Dephospho-CoA kinase (200 aa).

In terms of domain architecture, DPCK spans 2–200 (LIAVVGKAGV…CHHGHYQTPK (199 aa)). Residue 10-15 (GVGKTT) coordinates ATP.

It belongs to the CoaE family.

Its subcellular location is the cytoplasm. The catalysed reaction is 3'-dephospho-CoA + ATP = ADP + CoA + H(+). It functions in the pathway cofactor biosynthesis; coenzyme A biosynthesis; CoA from (R)-pantothenate: step 5/5. Its function is as follows. Catalyzes the phosphorylation of the 3'-hydroxyl group of dephosphocoenzyme A to form coenzyme A. The sequence is that of Dephospho-CoA kinase from Mycoplasma pneumoniae (strain ATCC 29342 / M129 / Subtype 1) (Mycoplasmoides pneumoniae).